The following is a 570-amino-acid chain: MRRLGPFHPRVHWAAPPSLSSGLHRLLFLRGTRIPSSTTLSPPRHDSLSLDGGTVNPPRVREPTGREAFGPSPASSDWLPARWRNGRGGRPRARLCSGWTAAEEARRNPTLGGLLGRQRLLLRMGGGRLGAPMERHGRASATSVSSAGEQAAGDPEGRRQEPLRRRASSASVPAVGASAEGTRRDRLGSYSGPTSVSRQRVESLRKKRPLFPWFGLDIGGTLVKLVYFEPKDITAEEEEEEVESLKSIRKYLTSNVAYGSTGIRDVHLELKDLTLCGRKGNLHFIRFPTHDMPAFIQMGRDKNFSSLHTVFCATGGGAYKFEQDFLTIGDLQLCKLDELDCLIKGILYIDSVGFNGRSQCYYFENPADSEKCQKLPFDLKNPYPLLLVNIGSGVSILAVYSKDNYKRVTGTSLGGGTFFGLCCLLTGCTTFEEALEMASRGDSTKVDKLVRDIYGGDYERFGLPGWAVASSFGNMMSKEKREAVSKEDLARATLITITNNIGSIARMCALNENINQVVFVGNFLRINTIAMRLLAYALDYWSKGQLKALFSEHEGYFGAVGALLELLKIP.

The N-terminal 31 residues, Met-1–Gly-31, are a transit peptide targeting the mitochondrion. 2 disordered regions span residues Ile-34–Arg-94 and Gly-127–Arg-198. A Nucleolar localization signal motif is present at residues Arg-82–Arg-94. The segment covering Arg-84–Ala-93 has biased composition (basic residues). The segment covering Pro-155 to Arg-164 has biased composition (basic and acidic residues). Residues Ser-168, Ser-169, and Ser-189 each carry the phosphoserine modification. Residues Ser-168 to Ala-179 show a composition bias toward low complexity. The short motif at Leu-268 to Leu-275 is the Nuclear export signal element. The active-site Proton acceptor is Glu-338. 3 residues coordinate acetyl-CoA: Ser-392, Ser-395, and Arg-407.

This sequence belongs to the type II pantothenate kinase family. In terms of assembly, homodimer. Synthesized as a 62-kDa precursor which is proteolytically processed by the mitochondrial-processing peptidase (MPP) via a 59-kDa intermediate to yield the mature mitochondrial 48-kDa subunit. Expressed in the brain (at protein level). Ubiquitous. Highly expressed in the testis. Expressed in the umbilical vein endothelial cells (HUVEC).

The protein localises to the mitochondrion. It is found in the mitochondrion intermembrane space. Its subcellular location is the nucleus. It localises to the cytoplasm. It carries out the reaction (R)-pantothenate + ATP = (R)-4'-phosphopantothenate + ADP + H(+). It functions in the pathway cofactor biosynthesis; coenzyme A biosynthesis; CoA from (R)-pantothenate: step 1/5. Its activity is regulated as follows. Strongly inhibited by acetyl-CoA and its thioesters. Activated by palmitoylcarnitine. Mitochondrial isoform that catalyzes the phosphorylation of pantothenate to generate 4'-phosphopantothenate in the first and rate-determining step of coenzyme A (CoA) synthesis. Required for angiogenic activity of umbilical vein of endothelial cells (HUVEC). Its function is as follows. Cytoplasmic isoform that catalyzes the phosphorylation of pantothenate to generate 4'-phosphopantothenate in the first and rate-determining step of coenzyme A (CoA) synthesis. This is Pantothenate kinase 2, mitochondrial (PANK2) from Homo sapiens (Human).